A 763-amino-acid polypeptide reads, in one-letter code: Amine oxidase [copper-containing] 3 (763 aa).

Residues 1–5 (MNQKT) lie on the Cytoplasmic side of the membrane. Residues 6–26 (ILVLLILAVITIFALVCVLLV) form a helical; Signal-anchor for type II membrane protein membrane-spanning segment. The Extracellular portion of the chain corresponds to 27-763 (GRGGDGGEPS…AFSHGGFSHN (737 aa)). O-linked (GalNAc...) serine glycosylation is present at Ser43. An N-linked (GlcNAc...) asparagine glycan is attached at Asn137. An intrachain disulfide couples Cys198 to Cys199. Thr212 carries O-linked (GalNAc...) threonine glycosylation. N-linked (GlcNAc...) asparagine glycosylation is found at Asn232 and Asn294. Asp386 (proton acceptor) is an active-site residue. A disulfide bridge connects residues Cys404 and Cys430. Tyr471 acts as the Schiff-base intermediate with substrate; via topaquinone in catalysis. 2',4',5'-topaquinone is present on Tyr471. Cu(2+)-binding residues include His520 and His522. Positions 529, 530, 531, and 572 each coordinate Ca(2+). An N-linked (GlcNAc...) (complex) asparagine glycan is attached at Asn592. A glycan (N-linked (GlcNAc...) asparagine) is linked at Asn618. Glu641, Phe663, and Asn665 together coordinate Ca(2+). A glycan (N-linked (GlcNAc...) asparagine) is linked at Asn666. Residues Glu667, Asp673, and Leu674 each coordinate Ca(2+). Thr679 carries an O-linked (GlcNAc) threonine glycan. Residue His684 participates in Cu(2+) binding. A disulfide bridge links Cys734 with Cys741.

Belongs to the copper/topaquinone oxidase family. Homodimer; disulfide-linked. Can heterodimerize with isoform 2 leading to reduced surface expression. Probably forms heterodimers with AOC2. The cofactor is Cu(2+). Requires Ca(2+) as cofactor. It depends on L-topaquinone as a cofactor. In terms of processing, topaquinone (TPQ) is generated by copper-dependent autoxidation of a specific tyrosyl residue. N- and O-glycosylated. Strongly expressed on the high endothelial venules of peripheral lymph nodes and on hepatic endothelia. Also highly expressed in appendix, lung and small intestine. Expressed also in adipose tissue, in bone marrow, colon, heart, kidney, ovary, pancreas, placenta, prostate, skeletal muscle, spleen and testis. Isoform 2 seems to be the predominant transcript in fetal kidneys, fetal cartilage and fetal tonsils. The highest relative expression of isoform 2 occurs in skeletal muscle, heart, pancreas, kidney, and lung.

It localises to the cell membrane. The enzyme catalyses methylamine + O2 + H2O = formaldehyde + H2O2 + NH4(+). It catalyses the reaction benzylamine + O2 + H2O = benzaldehyde + H2O2 + NH4(+). It carries out the reaction 2-phenylethylamine + O2 + H2O = 2-phenylacetaldehyde + H2O2 + NH4(+). Functionally, catalyzes the oxidative deamination of primary amines to the corresponding aldehydes with the concomitant production of hydrogen peroxide and ammonia. Has a preference for the primary monoamines methylamine and benzylamine. Could also act on 2-phenylethylamine but much less efficiently. At endothelial cells surface can also function as a cell adhesion protein that participates in lymphocyte extravasation and recirculation by mediating the binding of lymphocytes to peripheral lymph node vascular endothelial cells in an L-selectin-independent fashion. Its function is as follows. Has no semicarbazide-sensitive amine oxidase (SSAO) activity. The polypeptide is Amine oxidase [copper-containing] 3 (Homo sapiens (Human)).